An 892-amino-acid chain; its full sequence is Alanine--tRNA ligase (892 aa).

His-596, His-600, Cys-700, and His-704 together coordinate Zn(2+).

This sequence belongs to the class-II aminoacyl-tRNA synthetase family. It depends on Zn(2+) as a cofactor.

The protein resides in the cytoplasm. The catalysed reaction is tRNA(Ala) + L-alanine + ATP = L-alanyl-tRNA(Ala) + AMP + diphosphate. Catalyzes the attachment of alanine to tRNA(Ala) in a two-step reaction: alanine is first activated by ATP to form Ala-AMP and then transferred to the acceptor end of tRNA(Ala). Also edits incorrectly charged Ser-tRNA(Ala) and Gly-tRNA(Ala) via its editing domain. This Methanococcus maripaludis (strain C6 / ATCC BAA-1332) protein is Alanine--tRNA ligase.